Reading from the N-terminus, the 513-residue chain is MASNDYTQQATQSYGAYPTQPGQGYSQQSNQPYGQQSYGGYGQSTDTSGYGQSSYSGSYGQTQNTGYSTQSAPQGYSSAGGYGSSQSSQSSYGQQSSYPGYGQQPAPSGTSGSYGSSSQSSGYGQPQGGGYGQQSGYGGQQQSYGQQQSYNPPQGYGQQSQYNSSGGGGGGGGGSYGQDQPSMSSGGGGGGYGNQDQSGGYGGGQQDRGGRGRGGGGGYNRSSGGYEPRGRGGGRGGRGGMGGSDRGGFNKFGGPRDQGSRHDSEQDNSDNNTIFVQGLGENVTIESVADYFKQIGIIKTNKKTGQPMINLYTDRETGKLKGEATVSFDDPPSAKAAIDWFDGKEFSGNPIKVSFATRRADFNRGGGNGRGGRGRGGPMGRGGYGGGGSGGGGRGGFPSGGGGGGGQQRAGDWKCPNPTCENMNFSWRNECNQCKAPKPDGPGGGPGGSHMGGNYGDDRRGGRGGYDRGGYRGRGGDRGGFRGGRGGGDRGGFGPGKMDSRGEHRQDRRERPY.

Over residues 1–14 (MASNDYTQQATQSY) the composition is skewed to polar residues. The disordered stretch occupies residues 1–273 (MASNDYTQQA…SEQDNSDNNT (273 aa)). Composition is skewed to low complexity over residues 20–36 (QPGQ…YGQQ), 43–63 (QSTD…GQTQ), and 84–124 (SSQS…SGYG). Residues 125-139 (QPQGGGYGQQSGYGG) are compositionally biased toward gly residues. Residues 140–164 (QQQSYGQQQSYNPPQGYGQQSQYNS) are compositionally biased toward low complexity. Composition is skewed to gly residues over residues 165–176 (SGGGGGGGGGSY) and 185–219 (SGGG…GGGY). Arg-211 and Arg-213 each carry asymmetric dimethylarginine; alternate. Arg-211 and Arg-213 each carry omega-N-methylarginine; alternate. 5 positions are modified to asymmetric dimethylarginine: Arg-229, Arg-231, Arg-235, Arg-238, and Arg-246. Gly residues predominate over residues 231–246 (RGGGRGGRGGMGGSDR). Phosphoserine is present on Ser-264. One can recognise an RRM domain in the interval 272–358 (NTIFVQGLGE…NPIKVSFATR (87 aa)). Thr-273 bears the Phosphothreonine mark. A Glycyl lysine isopeptide (Lys-Gly) (interchain with G-Cter in SUMO2) cross-link involves residue Lys-321. Ser-327 is modified (phosphoserine). Disordered stretches follow at residues 362-411 (FNRG…QRAG) and 431-513 (CNQC…ERPY). Residues Arg-364, Arg-370, Arg-373, Arg-375, and Arg-381 each carry the asymmetric dimethylarginine modification. The segment covering 364 to 408 (RGGGNGRGGRGRGGPMGRGGYGGGGSGGGGRGGFPSGGGGGGGQQ) has biased composition (gly residues). Position 394 is an asymmetric dimethylarginine; alternate (Arg-394). Arg-394 is subject to Omega-N-methylarginine; alternate. The segment at 409 to 440 (RAGDWKCPNPTCENMNFSWRNECNQCKAPKPD) adopts a RanBP2-type zinc-finger fold. Residues 441–455 (GPGGGPGGSHMGGNY) are compositionally biased toward gly residues. Basic and acidic residues predominate over residues 456-480 (GDDRRGGRGGYDRGGYRGRGGDRGG). Residues Arg-460, Arg-463, Arg-468, Arg-472, Arg-474, Arg-478, Arg-482, and Arg-485 each carry the asymmetric dimethylarginine modification. The span at 481–495 (FRGGRGGGDRGGFGP) shows a compositional bias: gly residues. Arg-490 is subject to Asymmetric dimethylarginine; alternate. Position 490 is an omega-N-methylarginine; alternate (Arg-490). Residues 498 to 513 (MDSRGEHRQDRRERPY) show a composition bias toward basic and acidic residues.

Belongs to the RRM TET family. As to quaternary structure, self-oligomerizes (via N-terminal region). Oligomerization is essential for chromatin binding. Component of nuclear riboprotein complexes. Interacts with ILF3, TDRD3 and SF1. Interacts through its C-terminus with SFRS13A. Interacts with OTUB1 and SARNP. Interacts with LRSAM1. Interacts with SAFB1 in a DNA-dependent manner; this interaction tethers FUS to chromatin. Interacts with MATR3. Interacts with SNRNP70 and POLR2A; these interactions couple RNA transcription and splicing. Interacts (through its RNA-binding domain) with RALY (through its RNA-binding domain); both are components of the same RNPs. Post-translationally, phosphorylated in its N-terminal serine residues upon induced DNA damage. ATM and DNA-PK are able to phosphorylate FUS N-terminal region.

The protein localises to the nucleus. Its function is as follows. DNA/RNA-binding protein that plays a role in various cellular processes such as transcription regulation, RNA splicing, RNA transport, DNA repair and damage response. Binds to ssRNA containing the consensus sequence 5'-AGGUAA-3'. Binds to nascent pre-mRNAs and acts as a molecular mediator between RNA polymerase II and U1 small nuclear ribonucleoprotein thereby coupling transcription and splicing. Also binds its own pre-mRNA and autoregulates its expression; this autoregulation mechanism is mediated by non-sense-mediated decay. Plays a role in DNA repair mechanisms by promoting D-loop formation and homologous recombination during DNA double-strand break repair. In neuronal cells, plays crucial roles in dendritic spine formation and stability, RNA transport, mRNA stability and synaptic homeostasis. The sequence is that of RNA-binding protein FUS (FUS) from Bos taurus (Bovine).